Here is a 515-residue protein sequence, read N- to C-terminus: ATP synthase subunit alpha (515 aa).

171-178 is a binding site for ATP; sequence GDRQTGKT.

This sequence belongs to the ATPase alpha/beta chains family. In terms of assembly, F-type ATPases have 2 components, CF(1) - the catalytic core - and CF(0) - the membrane proton channel. CF(1) has five subunits: alpha(3), beta(3), gamma(1), delta(1), epsilon(1). CF(0) has three main subunits: a(1), b(2) and c(9-12). The alpha and beta chains form an alternating ring which encloses part of the gamma chain. CF(1) is attached to CF(0) by a central stalk formed by the gamma and epsilon chains, while a peripheral stalk is formed by the delta and b chains.

The protein resides in the cell inner membrane. It catalyses the reaction ATP + H2O + 4 H(+)(in) = ADP + phosphate + 5 H(+)(out). In terms of biological role, produces ATP from ADP in the presence of a proton gradient across the membrane. The alpha chain is a regulatory subunit. The protein is ATP synthase subunit alpha of Xanthomonas campestris pv. campestris (strain 8004).